The chain runs to 357 residues: Prostaglandin D2 receptor (357 aa).

Topologically, residues 1–20 are extracellular; that stretch reads MNESYRCQTSTWVERGSSAT. A glycan (N-linked (GlcNAc...) asparagine) is linked at Asn-2. The helical transmembrane segment at 21-41 threads the bilayer; sequence MGAVLFGAGLLGNLLALVLLA. Topologically, residues 42–58 are cytoplasmic; it reads RSGLGSCRPGPLHPPPS. The helical transmembrane segment at 59-79 threads the bilayer; sequence VFYVLVCGLTVTDLLGKCLIS. The Extracellular portion of the chain corresponds to 80–106; that stretch reads PMVLAAYAQNQSLKELLPASGNQLCET. An N-linked (GlcNAc...) asparagine glycan is attached at Asn-89. Cys-104 and Cys-182 are joined by a disulfide. The chain crosses the membrane as a helical span at residues 107 to 127; that stretch reads FAFLMSFFGLASTLQLLAMAV. Residues 128–149 lie on the Cytoplasmic side of the membrane; it reads ECWLSLGHPFFYQRHVTLRRGV. The chain crosses the membrane as a helical span at residues 150–170; it reads LVAPVVAAFCLAFCALPFAGF. Over 171 to 194 the chain is Extracellular; the sequence is GKFVQYCPGTWCFIQMIHKERSFS. Residues 195 to 215 traverse the membrane as a helical segment; the sequence is VIGFSVLYSSLMALLVLATVV. Residues 216 to 261 lie on the Cytoplasmic side of the membrane; the sequence is CNLGAMYNLYDMHRRQRHYPHRCSRDRAQSGSDYRHGSLHPLEELD. Residues 262-282 traverse the membrane as a helical segment; sequence HFVLLALMTVLFTMCSLPLIY. Residues 283-306 are Extracellular-facing; sequence RAYYGAFKLENKAEGDSEDLQALR. Residues 307–327 traverse the membrane as a helical segment; it reads FLSVISIVDPWIFIIFRTSVF. The Cytoplasmic segment spans residues 328 to 357; it reads RMLFHKVFTRPLIYRNWSSHSQQSNVESTL.

Belongs to the G-protein coupled receptor 1 family. Most abundantly expressed in the ileum, followed by lung, stomach and uterus.

The protein resides in the cell membrane. Functionally, receptor for prostaglandin D2 (PGD2). The activity of this receptor is mainly mediated by G(s) proteins that stimulate adenylate cyclase, resulting in an elevation of intracellular cAMP. A mobilization of calcium is also observed, but without formation of inositol 1,4,5-trisphosphate. Involved in PLA2G3-dependent maturation of mast cells. PLA2G3 is secreted by immature mast cells and acts on nearby fibroblasts upstream to PTDGS to synthesize PGD2, which in turn promotes mast cell maturation and degranulation via PTGDR. This is Prostaglandin D2 receptor (Ptgdr) from Mus musculus (Mouse).